Consider the following 768-residue polypeptide: Tripartite motif-containing protein 67 (768 aa).

The RING-type; degenerate zinc-finger motif lies at Cys7 to Glu42. Residues Ala55–Ala70 show a composition bias toward low complexity. 2 disordered regions span residues Ala55 to Gly74 and Gln247 to Pro284. The B box-type 1; degenerate zinc-finger motif lies at Ala201–Pro248. Positions Gln247–Ala257 are enriched in pro residues. The B box-type 2 zinc-finger motif lies at Arg285–Leu327. Positions 290, 293, 313, and 319 each coordinate Zn(2+). A coiled-coil region spans residues Lys332–Asn369. One can recognise a COS domain in the interval Ile435–Val493. Residues Pro498–Val592 form the Fibronectin type-III domain. A B30.2/SPRY domain is found at Asn574–Leu765.

It localises to the cytoplasm. Its subcellular location is the cytoskeleton. This Mus musculus (Mouse) protein is Tripartite motif-containing protein 67 (Trim67).